The primary structure comprises 395 residues: Succinyl-diaminopimelate desuccinylase (395 aa).

Zn(2+) is bound at residue histidine 74. Aspartate 76 is an active-site residue. Aspartate 107 lines the Zn(2+) pocket. Catalysis depends on glutamate 141, which acts as the Proton acceptor. Zn(2+) is bound by residues glutamate 142, glutamate 170, and histidine 368.

Belongs to the peptidase M20A family. DapE subfamily. In terms of assembly, homodimer. Zn(2+) serves as cofactor. Co(2+) is required as a cofactor.

The enzyme catalyses N-succinyl-(2S,6S)-2,6-diaminopimelate + H2O = (2S,6S)-2,6-diaminopimelate + succinate. Its pathway is amino-acid biosynthesis; L-lysine biosynthesis via DAP pathway; LL-2,6-diaminopimelate from (S)-tetrahydrodipicolinate (succinylase route): step 3/3. Functionally, catalyzes the hydrolysis of N-succinyl-L,L-diaminopimelic acid (SDAP), forming succinate and LL-2,6-diaminopimelate (DAP), an intermediate involved in the bacterial biosynthesis of lysine and meso-diaminopimelic acid, an essential component of bacterial cell walls. The chain is Succinyl-diaminopimelate desuccinylase from Brucella canis (strain ATCC 23365 / NCTC 10854 / RM-666).